A 493-amino-acid polypeptide reads, in one-letter code: Probable cytosol aminopeptidase (493 aa).

Mn(2+) contacts are provided by Lys257 and Asp262. Residue Lys269 is part of the active site. Residues Asp281, Asp341, and Glu343 each coordinate Mn(2+). Arg345 is an active-site residue.

Belongs to the peptidase M17 family. The cofactor is Mn(2+).

The protein localises to the cytoplasm. The catalysed reaction is Release of an N-terminal amino acid, Xaa-|-Yaa-, in which Xaa is preferably Leu, but may be other amino acids including Pro although not Arg or Lys, and Yaa may be Pro. Amino acid amides and methyl esters are also readily hydrolyzed, but rates on arylamides are exceedingly low.. It carries out the reaction Release of an N-terminal amino acid, preferentially leucine, but not glutamic or aspartic acids.. Functionally, presumably involved in the processing and regular turnover of intracellular proteins. Catalyzes the removal of unsubstituted N-terminal amino acids from various peptides. The sequence is that of Probable cytosol aminopeptidase from Synechococcus sp. (strain WH7803).